Reading from the N-terminus, the 105-residue chain is Large ribosomal subunit protein uL24 (105 aa).

It belongs to the universal ribosomal protein uL24 family. In terms of assembly, part of the 50S ribosomal subunit.

Functionally, one of two assembly initiator proteins, it binds directly to the 5'-end of the 23S rRNA, where it nucleates assembly of the 50S subunit. Its function is as follows. One of the proteins that surrounds the polypeptide exit tunnel on the outside of the subunit. This chain is Large ribosomal subunit protein uL24, found in Mycolicibacterium vanbaalenii (strain DSM 7251 / JCM 13017 / BCRC 16820 / KCTC 9966 / NRRL B-24157 / PYR-1) (Mycobacterium vanbaalenii).